A 125-amino-acid polypeptide reads, in one-letter code: Phosphoribosyl-AMP cyclohydrolase (125 aa).

Asp86 lines the Mg(2+) pocket. Residue Cys87 coordinates Zn(2+). Mg(2+) contacts are provided by Asp88 and Asp90. Cys103 and Cys110 together coordinate Zn(2+).

Belongs to the PRA-CH family. Homodimer. It depends on Mg(2+) as a cofactor. Zn(2+) is required as a cofactor.

Its subcellular location is the cytoplasm. It catalyses the reaction 1-(5-phospho-beta-D-ribosyl)-5'-AMP + H2O = 1-(5-phospho-beta-D-ribosyl)-5-[(5-phospho-beta-D-ribosylamino)methylideneamino]imidazole-4-carboxamide. It functions in the pathway amino-acid biosynthesis; L-histidine biosynthesis; L-histidine from 5-phospho-alpha-D-ribose 1-diphosphate: step 3/9. Catalyzes the hydrolysis of the adenine ring of phosphoribosyl-AMP. The polypeptide is Phosphoribosyl-AMP cyclohydrolase (Erythrobacter litoralis (strain HTCC2594)).